Here is a 242-residue protein sequence, read N- to C-terminus: Ribosomal RNA small subunit methyltransferase G (242 aa).

S-adenosyl-L-methionine-binding positions include G79, F84, 130-131 (AE), and R150.

The protein belongs to the methyltransferase superfamily. RNA methyltransferase RsmG family.

The protein localises to the cytoplasm. Specifically methylates the N7 position of a guanine in 16S rRNA. The polypeptide is Ribosomal RNA small subunit methyltransferase G (Levilactobacillus brevis (strain ATCC 367 / BCRC 12310 / CIP 105137 / JCM 1170 / LMG 11437 / NCIMB 947 / NCTC 947) (Lactobacillus brevis)).